The following is a 31-amino-acid chain: Acetyl-CoA carboxylase (31 aa).

Positions 1–31 (RISSSVIAHKTQLDSGKREVYSSHMQLGGPK) are disordered. Residues 11-21 (TQLDSGKREVY) are compositionally biased toward basic and acidic residues.

It carries out the reaction hydrogencarbonate + acetyl-CoA + ATP = malonyl-CoA + ADP + phosphate + H(+). Its pathway is lipid metabolism; malonyl-CoA biosynthesis; malonyl-CoA from acetyl-CoA: step 1/1. This Catharanthus roseus (Madagascar periwinkle) protein is Acetyl-CoA carboxylase.